Consider the following 415-residue polypeptide: MTIPDLCNDLVDEILCRVPARNLKRLRSTSKRWNRLFKDDRRFAREHMHKAPKEYLPLMLTSEYRICPVSINLQGDVPSVVLKRELSLPDPDYSHQFDIGRVFHCDGLLVCNHVGKNPRYGSKIVVWNPLTGQTRWIEAGYRWKEYEVRFVLGYCYQQDENNSCSKKIYKILCFYPNGQDTEIYELNYSDRWTRTIPDGDLTPGWTLIYSEQTVSMNGNLYLFASEKSKPHLGVSLLRFDFSTEKSSLCVTLPYQRPRYEILSISAVRGGENLSLLLQLDFESKTEIWVTNKIDDTTTKGAAVSWTKVLAFDLSPDLQLFSEEVNFLLDEDKKVAVCCERWLEPQEHHRYQCRREYKITDKIYILGEDNKVDEVGSGEGEATDSLEGISQVILNYAPSLVQIEQAGGGKTKRGDD.

One can recognise an F-box domain in the interval 1-46 (MTIPDLCNDLVDEILCRVPARNLKRLRSTSKRWNRLFKDDRRFARE).

Interacts with EIN2 (via C-terminus).

Functionally, negative regulator of EIN2 protein stability. The chain is F-box protein ETP1 from Arabidopsis thaliana (Mouse-ear cress).